A 359-amino-acid chain; its full sequence is 3-dehydroquinate synthase (359 aa).

Residues aspartate 71–lysine 76, glycine 105–aspartate 109, threonine 129–threonine 130, lysine 142, and lysine 151 each bind NAD(+). Glutamate 184, histidine 247, and histidine 264 together coordinate Zn(2+).

Belongs to the sugar phosphate cyclases superfamily. Dehydroquinate synthase family. It depends on Co(2+) as a cofactor. Zn(2+) is required as a cofactor. The cofactor is NAD(+).

It is found in the cytoplasm. The catalysed reaction is 7-phospho-2-dehydro-3-deoxy-D-arabino-heptonate = 3-dehydroquinate + phosphate. It functions in the pathway metabolic intermediate biosynthesis; chorismate biosynthesis; chorismate from D-erythrose 4-phosphate and phosphoenolpyruvate: step 2/7. Its function is as follows. Catalyzes the conversion of 3-deoxy-D-arabino-heptulosonate 7-phosphate (DAHP) to dehydroquinate (DHQ). The polypeptide is 3-dehydroquinate synthase (Burkholderia lata (strain ATCC 17760 / DSM 23089 / LMG 22485 / NCIMB 9086 / R18194 / 383)).